Consider the following 383-residue polypeptide: uncharacterized protein (383 aa).

The first 23 residues, 1–23, serve as a signal peptide directing secretion; it reads MKLTSIPIASTLLSLLAASGTLA.

This sequence belongs to the but2 family.

The protein resides in the cytoplasm. Its subcellular location is the nucleus. This is an uncharacterized protein from Schizosaccharomyces pombe (strain 972 / ATCC 24843) (Fission yeast).